Here is a 248-residue protein sequence, read N- to C-terminus: 1-(5-phosphoribosyl)-5-[(5-phosphoribosylamino)methylideneamino] imidazole-4-carboxamide isomerase (248 aa).

Aspartate 8 serves as the catalytic Proton acceptor. The Proton donor role is filled by aspartate 131.

Belongs to the HisA/HisF family.

Its subcellular location is the cytoplasm. It carries out the reaction 1-(5-phospho-beta-D-ribosyl)-5-[(5-phospho-beta-D-ribosylamino)methylideneamino]imidazole-4-carboxamide = 5-[(5-phospho-1-deoxy-D-ribulos-1-ylimino)methylamino]-1-(5-phospho-beta-D-ribosyl)imidazole-4-carboxamide. Its pathway is amino-acid biosynthesis; L-histidine biosynthesis; L-histidine from 5-phospho-alpha-D-ribose 1-diphosphate: step 4/9. The protein is 1-(5-phosphoribosyl)-5-[(5-phosphoribosylamino)methylideneamino] imidazole-4-carboxamide isomerase of Cupriavidus taiwanensis (strain DSM 17343 / BCRC 17206 / CCUG 44338 / CIP 107171 / LMG 19424 / R1) (Ralstonia taiwanensis (strain LMG 19424)).